Consider the following 399-residue polypeptide: Probable peptidoglycan glycosyltransferase FtsW (399 aa).

Over 1 to 32 (MMAGFAQTTITKINQFYERWMPRLPAEMTARN) the chain is Cytoplasmic. The helical transmembrane segment at 33-53 (VLVFCVVCLLCIGSVMVASAS) threads the bilayer. Over 54–72 (MPYAEYMHENPFHYVVRHA) the chain is Periplasmic. Residues 73–93 (ISIATAAIVAYLVYKVPLNVW) form a helical membrane-spanning segment. The Cytoplasmic portion of the chain corresponds to 94-97 (FKNT). Residues 98-118 (FSFWLITILLLLAVLVIGTEV) form a helical membrane-spanning segment. Residues 119–126 (NGSRRWIR) lie on the Periplasmic side of the membrane. Residues 127–147 (LAGFTLQPTEVAKVMMAIFTA) form a helical membrane-spanning segment. Residues 148–159 (DYVVRRAKEVRT) are Cytoplasmic-facing. Residues 160 to 180 (HWKGLVRLSGVMAITVGLIIA) form a helical membrane-spanning segment. Topologically, residues 181–183 (EPD) are periplasmic. The chain crosses the membrane as a helical span at residues 184–204 (LGATVVIVLMMVGIFFLAGAP). The Cytoplasmic segment spans residues 205–207 (PTQ). Residues 208 to 228 (FAIMLGAVVMGIGFLILFEPY) form a helical membrane-spanning segment. Over 229–292 (RLARAMSFTN…DFMLAVLGEE (64 aa)) the chain is Periplasmic. A helical membrane pass occupies residues 293–313 (FGFVGISIVIGLSFIMLACCI). The Cytoplasmic segment spans residues 314–327 (KIGHRALKHNFLRA). Residues 328–348 (GYLAYGISIIFLLQIIVNAGM) traverse the membrane as a helical segment. Topologically, residues 349–359 (NMGLMPTKGLT) are periplasmic. The helical transmembrane segment at 360–380 (LPFISYGGTSLMMCAAMISLI) threads the bilayer. The Cytoplasmic portion of the chain corresponds to 381-399 (LRIDASTQEINPDREESNF).

This sequence belongs to the SEDS family. FtsW subfamily.

It is found in the cell inner membrane. It carries out the reaction [GlcNAc-(1-&gt;4)-Mur2Ac(oyl-L-Ala-gamma-D-Glu-L-Lys-D-Ala-D-Ala)](n)-di-trans,octa-cis-undecaprenyl diphosphate + beta-D-GlcNAc-(1-&gt;4)-Mur2Ac(oyl-L-Ala-gamma-D-Glu-L-Lys-D-Ala-D-Ala)-di-trans,octa-cis-undecaprenyl diphosphate = [GlcNAc-(1-&gt;4)-Mur2Ac(oyl-L-Ala-gamma-D-Glu-L-Lys-D-Ala-D-Ala)](n+1)-di-trans,octa-cis-undecaprenyl diphosphate + di-trans,octa-cis-undecaprenyl diphosphate + H(+). It participates in cell wall biogenesis; peptidoglycan biosynthesis. Its function is as follows. Peptidoglycan polymerase that is essential for cell division. This chain is Probable peptidoglycan glycosyltransferase FtsW, found in Acinetobacter baylyi (strain ATCC 33305 / BD413 / ADP1).